Here is a 471-residue protein sequence, read N- to C-terminus: Cysteine--tRNA ligase (471 aa).

Cys-30 serves as a coordination point for Zn(2+). Positions 32–42 (PTVYNFAHIGN) match the 'HIGH' region motif. Zn(2+) contacts are provided by Cys-212, His-237, and Glu-241. The 'KMSKS' region signature appears at 270–274 (KMSKS). Residue Lys-273 coordinates ATP.

Belongs to the class-I aminoacyl-tRNA synthetase family. As to quaternary structure, monomer. Zn(2+) is required as a cofactor.

It is found in the cytoplasm. The enzyme catalyses tRNA(Cys) + L-cysteine + ATP = L-cysteinyl-tRNA(Cys) + AMP + diphosphate. The sequence is that of Cysteine--tRNA ligase from Leptospira interrogans serogroup Icterohaemorrhagiae serovar copenhageni (strain Fiocruz L1-130).